A 1053-amino-acid polypeptide reads, in one-letter code: CRISPR-associated endonuclease Cas9 (1053 aa).

Positions 1–41 (MKRNYILGLDIGITSVGYGIIDYETRDVIDAGVRLFKEANV) are ruvC-I. The active-site For RuvC-like nuclease domain is the D10. D10 is a binding site for Mg(2+). A recognition lobe region spans residues 41-426 (VENNEGRRSK…IFNRLKLVPK (386 aa)). The interval 435-481 (EIPTTLVDDFILSPVVKRSFIQSIKVINAIIKKYGLPNDIIIELARE) is ruvC-II. E477 and E481 together coordinate Mg(2+). The region spanning 480–646 (REKNSKDAQK…VQKDFINRNL (167 aa)) is the HNH Cas9-type domain. Catalysis depends on H557, which acts as the Proton acceptor for HNH nuclease domain. A ruvC-III region spans residues 650–775 (RYATRGLMNL…FKDYKYSHRV (126 aa)). A Mg(2+)-binding site is contributed by H701. Y789 contributes to the RNA binding site. 2 PAM substrate-binding regions span residues 882 to 889 (YYGNKLNA) and 985 to 993 (NNDLLNRIE). The PAM-interacting domain (PI) stretch occupies residues 910-1053 (KPYRFDVYLD…KKHPQIIKKG (144 aa)).

It belongs to the CRISPR-associated Cas9 family. Subtype II-A subfamily. As to quaternary structure, monomer. Binds crRNA and tracrRNA. Mg(2+) serves as cofactor.

Functionally, CRISPR (clustered regularly interspaced short palindromic repeat) is an adaptive immune system that provides protection against mobile genetic elements (viruses, transposable elements and conjugative plasmids). CRISPR clusters contain spacers, sequences complementary to antecedent mobile elements, and target invading nucleic acids. CRISPR clusters are transcribed and processed into CRISPR RNA (crRNA). In type II CRISPR systems correct processing of pre-crRNA requires a trans-encoded small RNA (tracrRNA), endogenous ribonuclease 3 (rnc) and this protein. The tracrRNA serves as a guide for ribonuclease 3-aided processing of pre-crRNA. Subsequently Cas9/crRNA/tracrRNA endonucleolytically cleaves linear or circular dsDNA target complementary to the spacer; Cas9 is inactive in the absence of the 2 guide RNAs (gRNA). Cas9 recognizes the protospacer adjacent motif (PAM) in the CRISPR repeat sequences to help distinguish self versus nonself, as targets within the bacterial CRISPR locus do not have PAMs. PAM recognition is also required for catalytic activity. This Staphylococcus aureus protein is CRISPR-associated endonuclease Cas9.